Reading from the N-terminus, the 922-residue chain is Hexokinase-3 (922 aa).

Residues 1–23 are disordered; it reads MATIGPSGLHPGERASVCPHEGV. 2 Hexokinase domains span residues 25–469 and 475–911; these read RPSG…MVTA and AAHR…LVTA. The tract at residues 82–218 is hexokinase small subdomain 1; that stretch reads HGTEQGDFLV…TYRIDVVAMV (137 aa). 93–100 contributes to the ATP binding site; it reads ELGATGAS. 93 to 102 contacts D-glucose 6-phosphate; it reads ELGATGASLR. D-glucose-binding positions include S166, 183-184, and 219-220; these read TK and ND. The segment at 219 to 458 is hexokinase large subdomain 1; sequence NDTVGTMMGC…CDVSFIPSVD (240 aa). 2 residues coordinate D-glucose 6-phosphate: D220 and T243. D-glucose is bound by residues N246, E271, and 302–305; that span reads QRFE. 424–426 is a binding site for D-glucose 6-phosphate; it reads GGR. Residues 436–437 and 540–545 contribute to the ATP site; these read RI and DLGGTN. The tract at residues 529–660 is hexokinase small subdomain 2; it reads DGSERGDFLA…AVELNVVAIV (132 aa). Residue 540 to 544 participates in D-glucose 6-phosphate binding; it reads DLGGT. Residues 608–609, 625–626, and 661–662 contribute to the D-glucose site; these read SF, TK, and ND. Positions 661-900 are hexokinase large subdomain 2; sequence NDTVGTMMSC…CTVTFLQSED (240 aa). Positions 662 and 685 each coordinate D-glucose 6-phosphate. ATP is bound at residue T685. D-glucose contacts are provided by residues 687–688, E713, and E747; that span reads TN. ATP-binding positions include 752-753, 789-793, and 868-872; these read GM, TKFLS, and TLYKL. D-glucose 6-phosphate contacts are provided by residues 866-868 and S902; that span reads DGT.

It belongs to the hexokinase family.

The enzyme catalyses a D-hexose + ATP = a D-hexose 6-phosphate + ADP + H(+). It catalyses the reaction D-fructose + ATP = D-fructose 6-phosphate + ADP + H(+). It carries out the reaction D-glucose + ATP = D-glucose 6-phosphate + ADP + H(+). The protein operates within carbohydrate metabolism; hexose metabolism. Its pathway is carbohydrate degradation; glycolysis; D-glyceraldehyde 3-phosphate and glycerone phosphate from D-glucose: step 1/4. With respect to regulation, hexokinase is an allosteric enzyme inhibited by its product D-glucose 6-phosphate. Its function is as follows. Catalyzes the phosphorylation of hexose, such as D-glucose and D-fructose, to hexose 6-phosphate (D-glucose 6-phosphate and D-fructose 6-phosphate, respectively). Mediates the initial step of glycolysis by catalyzing phosphorylation of D-glucose to D-glucose 6-phosphate. In Mus musculus (Mouse), this protein is Hexokinase-3.